The primary structure comprises 126 residues: Large ribosomal subunit protein bL17 (126 aa).

It belongs to the bacterial ribosomal protein bL17 family. In terms of assembly, part of the 50S ribosomal subunit. Contacts protein L32.

This chain is Large ribosomal subunit protein bL17, found in Limosilactobacillus fermentum (strain NBRC 3956 / LMG 18251) (Lactobacillus fermentum).